The sequence spans 96 residues: Citrate lyase acyl carrier protein (96 aa).

O-(phosphoribosyl dephospho-coenzyme A)serine is present on S14.

This sequence belongs to the CitD family. Oligomer with a subunit composition of (alpha,beta,gamma)6.

It localises to the cytoplasm. Functionally, covalent carrier of the coenzyme of citrate lyase. The sequence is that of Citrate lyase acyl carrier protein from Pectobacterium atrosepticum (strain SCRI 1043 / ATCC BAA-672) (Erwinia carotovora subsp. atroseptica).